The chain runs to 129 residues: Large ribosomal subunit protein bL17 (129 aa).

It belongs to the bacterial ribosomal protein bL17 family. Part of the 50S ribosomal subunit. Contacts protein L32.

The sequence is that of Large ribosomal subunit protein bL17 from Acidovorax ebreus (strain TPSY) (Diaphorobacter sp. (strain TPSY)).